A 710-amino-acid chain; its full sequence is Polyribonucleotide nucleotidyltransferase (710 aa).

Residues Asp489 and Asp495 each contribute to the Mg(2+) site. The KH domain maps to Pro556–Ile615. Positions Gly625–Lys693 constitute an S1 motif domain. The tract at residues Ser691 to Asp710 is disordered. The segment covering Pro700–Asp710 has biased composition (basic and acidic residues).

This sequence belongs to the polyribonucleotide nucleotidyltransferase family. It depends on Mg(2+) as a cofactor.

The protein resides in the cytoplasm. The catalysed reaction is RNA(n+1) + phosphate = RNA(n) + a ribonucleoside 5'-diphosphate. Its function is as follows. Involved in mRNA degradation. Catalyzes the phosphorolysis of single-stranded polyribonucleotides processively in the 3'- to 5'-direction. The sequence is that of Polyribonucleotide nucleotidyltransferase from Streptococcus pyogenes serotype M49 (strain NZ131).